The primary structure comprises 731 residues: Catalase-peroxidase 2 (731 aa).

Residues 1–10 show a composition bias toward polar residues; it reads MAETPNSDMS. The segment at 1–26 is disordered; that stretch reads MAETPNSDMSGATGGRSKRPKSNQDW. Positions 95 to 218 form a cross-link, tryptophyl-tyrosyl-methioninium (Trp-Tyr) (with M-244); it reads WHSAGTYRTA…LGASVMGLIY (124 aa). H96 serves as the catalytic Proton acceptor. A cross-link (tryptophyl-tyrosyl-methioninium (Tyr-Met) (with W-95)) is located at residues 218–244; the sequence is YVNPEGPDGNPDPEASAKNIRQTFDRM. Residue H259 coordinates heme b.

As to quaternary structure, homodimer. Requires heme b as cofactor. In terms of processing, formation of the three residue Trp-Tyr-Met cross-link is important for the catalase, but not the peroxidase activity of the enzyme.

The enzyme catalyses H2O2 + AH2 = A + 2 H2O. It carries out the reaction 2 H2O2 = O2 + 2 H2O. Bifunctional enzyme with both catalase and broad-spectrum peroxidase activity. This is Catalase-peroxidase 2 from Haloarcula marismortui (strain ATCC 43049 / DSM 3752 / JCM 8966 / VKM B-1809) (Halobacterium marismortui).